We begin with the raw amino-acid sequence, 410 residues long: Bifunctional malic/malolactic enzyme (410 aa).

Tyr36 functions as the Proton donor in the catalytic mechanism. Catalysis depends on Lys91, which acts as the Proton acceptor. A divalent metal cation is bound by residues Glu133, Asp134, and Asp159. NADP(+)-binding positions include 192–195, Asn286, and Asn317; that span reads AGAA.

The protein belongs to the malic enzymes family. Interacts with BrxC. Mg(2+) serves as cofactor. The cofactor is Mn(2+).

The enzyme catalyses (S)-malate + NADP(+) = pyruvate + CO2 + NADPH. The catalysed reaction is oxaloacetate + H(+) = pyruvate + CO2. It catalyses the reaction (S)-malate + H(+) = (S)-lactate + CO2. With respect to regulation, NADPH is a strong modulator that switches activity from a pyruvate-producing malic enzyme to a lactate-generating malolactic enzyme. Functionally, bifunctional enzyme with both malic and malolactic enzyme activities. In the absence of NADPH, catalyzes the reversible decarboxylation of malate to pyruvate. Can use NAD and NADP, but with a very strong preference for NADP. In the presence of excess NADPH, catalyzes the non-oxidative decarboxylation of malate to lactate. During growth on glucose, contributes to NADPH balancing via oxidation of the NADPH produced in excess by other enzymatic reactions. Can also catalyze the decarboxylation of oxaloacetate. This chain is Bifunctional malic/malolactic enzyme (ytsJ), found in Bacillus subtilis (strain 168).